We begin with the raw amino-acid sequence, 366 residues long: Ferrochelatase (366 aa).

Fe cation is bound by residues His210 and Glu293.

Belongs to the ferrochelatase family.

It localises to the cytoplasm. The catalysed reaction is heme b + 2 H(+) = protoporphyrin IX + Fe(2+). The protein operates within porphyrin-containing compound metabolism; protoheme biosynthesis; protoheme from protoporphyrin-IX: step 1/1. Its function is as follows. Catalyzes the ferrous insertion into protoporphyrin IX. The chain is Ferrochelatase from Leptospira borgpetersenii serovar Hardjo-bovis (strain L550).